The sequence spans 206 residues: Small ribosomal subunit protein uS4 (206 aa).

The 63-residue stretch at 96–158 (GRLDNVVYRM…AKQQSRIKAA (63 aa)) folds into the S4 RNA-binding domain.

This sequence belongs to the universal ribosomal protein uS4 family. In terms of assembly, part of the 30S ribosomal subunit. Contacts protein S5. The interaction surface between S4 and S5 is involved in control of translational fidelity.

Functionally, one of the primary rRNA binding proteins, it binds directly to 16S rRNA where it nucleates assembly of the body of the 30S subunit. In terms of biological role, with S5 and S12 plays an important role in translational accuracy. The sequence is that of Small ribosomal subunit protein uS4 from Vibrio atlanticus (strain LGP32) (Vibrio splendidus (strain Mel32)).